We begin with the raw amino-acid sequence, 141 residues long: Large ribosomal subunit protein uL11c (141 aa).

The protein belongs to the universal ribosomal protein uL11 family. Part of the ribosomal stalk of the 50S ribosomal subunit. Interacts with L10 and the large rRNA to form the base of the stalk. L10 forms an elongated spine to which L12 dimers bind in a sequential fashion forming a multimeric L10(L12)X complex.

The protein localises to the plastid. Its subcellular location is the chloroplast. Functionally, forms part of the ribosomal stalk which helps the ribosome interact with GTP-bound translation factors. This is Large ribosomal subunit protein uL11c from Guillardia theta (Cryptophyte).